The chain runs to 474 residues: Transcription factor fscB (474 aa).

Disordered regions lie at residues valine 114–threonine 153 and glycine 207–proline 242. Residues serine 120–serine 131 are compositionally biased toward low complexity. The span at histidine 132–threonine 153 shows a compositional bias: polar residues. The segment covering glycine 207–alanine 221 has biased composition (basic and acidic residues). A compositionally biased stretch (polar residues) spans glutamine 222–proline 240.

The protein belongs to the POU transcription factor family. Class-3 subfamily.

It is found in the nucleus. Functionally, transcription factor; part of the fragmented gene cluster that mediates the biosynthesis of fusarochromene, a tryptophan-derived metabolite closely related to a group of mycotoxins including fusarochromanone. This chain is Transcription factor fscB, found in Fusarium equiseti (Fusarium scirpi).